The sequence spans 278 residues: HTH-type transcriptional activator RhaS (278 aa).

An HTH araC/xylS-type domain is found at 174–272; sequence NQLMAWLEDH…NWSPRDIRQG (99 aa). 2 DNA-binding regions (H-T-H motif) span residues 191-212 and 239-262; these read EAVAEQFSLSLRTLHRQLKQHT and VTEIAYRCGFGDSNHFSTLFRREF.

In terms of assembly, binds DNA as a dimer.

It localises to the cytoplasm. Its function is as follows. Activates expression of the rhaBAD and rhaT operons. The polypeptide is HTH-type transcriptional activator RhaS (Salmonella agona (strain SL483)).